Reading from the N-terminus, the 272-residue chain is 3-methyl-2-oxobutanoate hydroxymethyltransferase (272 aa).

Asp-51 and Asp-90 together coordinate Mg(2+). Residues Asp-51–Ser-52, Asp-90, and Lys-120 contribute to the 3-methyl-2-oxobutanoate site. Position 122 (Glu-122) interacts with Mg(2+). Glu-189 serves as the catalytic Proton acceptor.

The protein belongs to the PanB family. As to quaternary structure, homodecamer; pentamer of dimers. Mg(2+) serves as cofactor.

Its subcellular location is the cytoplasm. It carries out the reaction 3-methyl-2-oxobutanoate + (6R)-5,10-methylene-5,6,7,8-tetrahydrofolate + H2O = 2-dehydropantoate + (6S)-5,6,7,8-tetrahydrofolate. It functions in the pathway cofactor biosynthesis; (R)-pantothenate biosynthesis; (R)-pantoate from 3-methyl-2-oxobutanoate: step 1/2. Its function is as follows. Catalyzes the reversible reaction in which hydroxymethyl group from 5,10-methylenetetrahydrofolate is transferred onto alpha-ketoisovalerate to form ketopantoate. This Syntrophus aciditrophicus (strain SB) protein is 3-methyl-2-oxobutanoate hydroxymethyltransferase.